Reading from the N-terminus, the 330-residue chain is Beta-1,6-galactofuranosyltransferase WbbI (330 aa).

It localises to the cytoplasm. It functions in the pathway bacterial outer membrane biogenesis; lipopolysaccharide biosynthesis. Functionally, involved in the transfer of galactofuranose (Galf) onto an alpha-D-gluco-configured acceptor substrate to form a beta-1,6-linkage. It uses n-octyl alpha-D-glucopyranoside as an acceptor substrate for the addition of galactofuranose from the donor substrate UDP-galactofuranose. It is not able to use beta-D-glucopyranoside isomers. The sequence is that of Beta-1,6-galactofuranosyltransferase WbbI (wbbI) from Escherichia coli (strain K12).